Here is a 101-residue protein sequence, read N- to C-terminus: Small ribosomal subunit protein uS14 (101 aa).

A compositionally biased stretch (basic and acidic residues) spans 1–10; that stretch reads MAKKSSVEKN. The disordered stretch occupies residues 1 to 23; it reads MAKKSSVEKNNRRKRMAKNAAPK. The span at 11-23 shows a compositional bias: basic residues; sequence NRRKRMAKNAAPK.

Belongs to the universal ribosomal protein uS14 family. As to quaternary structure, part of the 30S ribosomal subunit. Contacts proteins S3 and S10.

In terms of biological role, binds 16S rRNA, required for the assembly of 30S particles and may also be responsible for determining the conformation of the 16S rRNA at the A site. The sequence is that of Small ribosomal subunit protein uS14 from Bradyrhizobium sp. (strain BTAi1 / ATCC BAA-1182).